A 319-amino-acid polypeptide reads, in one-letter code: Myoblast determination protein 1 (319 aa).

Methionine 1 participates in a covalent cross-link: Peptide (Met-Gly) (interchain with G-Cter in ubiquitin). N6-methyllysine; by EHMT2 is present on lysine 104. Residues 109–160 (DRRKAATMRERRRLSKVNEAFETLKRCTSSNPNQRLPKVEILRNAIRYIEGL) form the bHLH domain. 2 disordered regions span residues 174–222 (AAAA…GARR) and 267–319 (PALL…YQVL). Over residues 197–207 (SDASSPRSNCS) the composition is skewed to polar residues. Positions 267–276 (PALLLADAPP) are enriched in low complexity.

In terms of assembly, efficient DNA binding requires dimerization with another bHLH protein. Seems to form active heterodimers with ITF-2. Interacts with SUV39H1. Interacts with DDX5. Interacts with CHD2. Interacts with TSC22D3. Interacts with SETD3. Interacts with P-TEFB complex; promotes the transcriptional activity of MYOD1 through its CDK9-mediated phosphorylation. Interacts with CSRP3. Interacts with NUPR1. Post-translationally, phosphorylated by CDK9. This phosphorylation promotes its function in muscle differentiation. In terms of processing, acetylated by a complex containing EP300 and PCAF. The acetylation is essential to activate target genes. Conversely, its deacetylation by SIRT1 inhibits its function. Ubiquitinated on the N-terminus; which is required for proteasomal degradation. Post-translationally, methylation at Lys-104 by EHMT2/G9a inhibits myogenic activity.

It localises to the nucleus. In terms of biological role, acts as a transcriptional activator that promotes transcription of muscle-specific target genes and plays a role in muscle differentiation. Together with MYF5 and MYOG, co-occupies muscle-specific gene promoter core region during myogenesis. Induces fibroblasts to differentiate into myoblasts. Interacts with and is inhibited by the twist protein. This interaction probably involves the basic domains of both proteins. The protein is Myoblast determination protein 1 (MYOD1) of Ovis aries (Sheep).